The primary structure comprises 99 residues: Transcriptional regulator WhiB2 (99 aa).

The 4Fe-4S Wbl-type domain maps to 33-90 (LCAQTDPEAFFPEKGGSTRDAKRVCAKCEVREQCLKWAIDHDERFGIWGGMSERERRR). Residues Cys34, Cys57, Cys60, and Cys66 each contribute to the [4Fe-4S] cluster site.

This sequence belongs to the WhiB family. [4Fe-4S] cluster is required as a cofactor. In terms of processing, the Fe-S cluster can be nitrosylated by nitric oxide (NO). Post-translationally, upon Fe-S cluster removal intramolecular disulfide bonds are formed.

It localises to the cytoplasm. In terms of biological role, acts as a transcriptional regulator. Probably redox-responsive. The apo- but not holo-form probably binds DNA. The sequence is that of Transcriptional regulator WhiB2 (whiB2) from Bifidobacterium longum (strain NCC 2705).